The following is a 174-amino-acid chain: Ribosome maturation factor RimP (174 aa).

This sequence belongs to the RimP family.

Its subcellular location is the cytoplasm. Its function is as follows. Required for maturation of 30S ribosomal subunits. This chain is Ribosome maturation factor RimP, found in Acinetobacter baumannii (strain AB307-0294).